Consider the following 327-residue polypeptide: tRNA dimethylallyltransferase (327 aa).

G14 to T21 contributes to the ATP binding site. T16–T21 serves as a coordination point for substrate. Interaction with substrate tRNA stretches follow at residues D39–L42 and Q163–R167.

Belongs to the IPP transferase family. Monomer. The cofactor is Mg(2+).

The enzyme catalyses adenosine(37) in tRNA + dimethylallyl diphosphate = N(6)-dimethylallyladenosine(37) in tRNA + diphosphate. Functionally, catalyzes the transfer of a dimethylallyl group onto the adenine at position 37 in tRNAs that read codons beginning with uridine, leading to the formation of N6-(dimethylallyl)adenosine (i(6)A). This chain is tRNA dimethylallyltransferase, found in Xanthomonas oryzae pv. oryzae (strain MAFF 311018).